Consider the following 663-residue polypeptide: UvrABC system protein B (663 aa).

The 158-residue stretch at 26–183 folds into the Helicase ATP-binding domain; that stretch reads DGLESGLAKQ…KRLAEMQYTR (158 aa). 39-46 contacts ATP; it reads GVTGSGKT. A Beta-hairpin motif is present at residues 92–115; sequence YYDYYQPEAYVPASDTFIEKDASI. The 167-residue stretch at 430-596 folds into the Helicase C-terminal domain; it reads QVDDLMSEIR…GINKSVEDIL (167 aa). The region spanning 624–659 is the UVR domain; sequence AKQINALEKQMYAHAQNMEFELAAKIRDEYLLLKEQ.

This sequence belongs to the UvrB family. Forms a heterotetramer with UvrA during the search for lesions. Interacts with UvrC in an incision complex.

It is found in the cytoplasm. Functionally, the UvrABC repair system catalyzes the recognition and processing of DNA lesions. A damage recognition complex composed of 2 UvrA and 2 UvrB subunits scans DNA for abnormalities. Upon binding of the UvrA(2)B(2) complex to a putative damaged site, the DNA wraps around one UvrB monomer. DNA wrap is dependent on ATP binding by UvrB and probably causes local melting of the DNA helix, facilitating insertion of UvrB beta-hairpin between the DNA strands. Then UvrB probes one DNA strand for the presence of a lesion. If a lesion is found the UvrA subunits dissociate and the UvrB-DNA preincision complex is formed. This complex is subsequently bound by UvrC and the second UvrB is released. If no lesion is found, the DNA wraps around the other UvrB subunit that will check the other stand for damage. This chain is UvrABC system protein B, found in Legionella pneumophila (strain Corby).